Here is a 184-residue protein sequence, read N- to C-terminus: Photosystem I assembly protein Ycf4 (184 aa).

2 consecutive transmembrane segments (helical) span residues 19 to 39 (ISNF…LLVG) and 57 to 77 (IVFF…LFIS).

It belongs to the Ycf4 family.

It is found in the plastid. Its subcellular location is the chloroplast thylakoid membrane. Functionally, seems to be required for the assembly of the photosystem I complex. This Atropa belladonna (Belladonna) protein is Photosystem I assembly protein Ycf4.